Here is a 160-residue protein sequence, read N- to C-terminus: SsrA-binding protein (160 aa).

The tract at residues 134–160 (YDKRDTERERDSNRELHRAVRNKGKED) is disordered.

Belongs to the SmpB family.

It localises to the cytoplasm. Its function is as follows. Required for rescue of stalled ribosomes mediated by trans-translation. Binds to transfer-messenger RNA (tmRNA), required for stable association of tmRNA with ribosomes. tmRNA and SmpB together mimic tRNA shape, replacing the anticodon stem-loop with SmpB. tmRNA is encoded by the ssrA gene; the 2 termini fold to resemble tRNA(Ala) and it encodes a 'tag peptide', a short internal open reading frame. During trans-translation Ala-aminoacylated tmRNA acts like a tRNA, entering the A-site of stalled ribosomes, displacing the stalled mRNA. The ribosome then switches to translate the ORF on the tmRNA; the nascent peptide is terminated with the 'tag peptide' encoded by the tmRNA and targeted for degradation. The ribosome is freed to recommence translation, which seems to be the essential function of trans-translation. This is SsrA-binding protein from Pseudomonas fluorescens (strain SBW25).